Reading from the N-terminus, the 412-residue chain is Serine hydroxymethyltransferase (412 aa).

Residues Leu-117 and 121–123 (GHL) each bind (6S)-5,6,7,8-tetrahydrofolate. Lys-226 is subject to N6-(pyridoxal phosphate)lysine. 349-351 (SPF) serves as a coordination point for (6S)-5,6,7,8-tetrahydrofolate.

It belongs to the SHMT family. As to quaternary structure, homodimer. Requires pyridoxal 5'-phosphate as cofactor.

It is found in the cytoplasm. It carries out the reaction (6R)-5,10-methylene-5,6,7,8-tetrahydrofolate + glycine + H2O = (6S)-5,6,7,8-tetrahydrofolate + L-serine. It participates in one-carbon metabolism; tetrahydrofolate interconversion. It functions in the pathway amino-acid biosynthesis; glycine biosynthesis; glycine from L-serine: step 1/1. Functionally, catalyzes the reversible interconversion of serine and glycine with tetrahydrofolate (THF) serving as the one-carbon carrier. This reaction serves as the major source of one-carbon groups required for the biosynthesis of purines, thymidylate, methionine, and other important biomolecules. Also exhibits THF-independent aldolase activity toward beta-hydroxyamino acids, producing glycine and aldehydes, via a retro-aldol mechanism. This chain is Serine hydroxymethyltransferase, found in Nitratidesulfovibrio vulgaris (strain DSM 19637 / Miyazaki F) (Desulfovibrio vulgaris).